The following is a 418-amino-acid chain: Nuclear receptor coactivator 6 (418 aa).

Disordered stretches follow at residues 1 to 21 (EQIM…QNQS) and 77 to 98 (PPGP…ANND). The interval 1-215 (EQIMTNQMQG…PPRKKKNCHQ (215 aa)) is TBP/GTF2A-binding region. The interval 1–352 (EQIMTNQMQG…LPVSQNVHPP (352 aa)) is CREBBP-binding region. An NCOA1-binding region region spans residues 1–418 (EQIMTNQMQG…YQESPQNSSS (418 aa)). The interval 60 to 214 (VSNSPSQVMG…KPPRKKKNCH (155 aa)) is NCOA6IP-binding region. Residues 84–98 (MAQQHTDPATTANND) show a composition bias toward polar residues. Phosphoserine is present on Ser171. Positions 174–178 (LVNLL) match the LXXLL motif motif. The tract at residues 186–418 (HFGVNNKQNN…YQESPQNSSS (233 aa)) is disordered. Low complexity predominate over residues 190-199 (NNKQNNTNAN). Over residues 200 to 212 (KQKKKKPPRKKKN) the composition is skewed to basic residues. Residues 269 to 279 (PLQQMPPQLMQ) are compositionally biased toward low complexity. Residues 282–310 (APPPQPPQQQPQPQLPQQQPQPQPPPPSQ) show a composition bias toward pro residues. A compositionally biased stretch (low complexity) spans 311–336 (PQSQQQQQQQQQQQQQQMMMMLMMQQ). Residues Arg342 and Arg353 each carry the asymmetric dimethylarginine modification. Over residues 358-370 (PDSQRVPMQQSGN) the composition is skewed to polar residues. The residue at position 391 (Arg391) is an Asymmetric dimethylarginine. The span at 399–418 (PLGSNSRKMVYQESPQNSSS) shows a compositional bias: polar residues.

Monomer and homodimer. Interacts in vitro with the basal transcription factors GTF2A and TBP, suggesting an autonomous transactivation function. Interacts with NCOA1, CRSP3, RBM14, the histone acetyltransferase proteins EP300 and CREBBP, and with methyltransferase proteins NCOA6IP and PRMT2. Component of the MLL2/3 complex (also named ASCOM complex), at least composed of KMT2D/MLL2 or KMT2C/MLL3, ASH2L, RBBP5, WDR5, NCOA6, DPY30, KDM6A, PAXIP1/PTIP, PAGR1 and alpha- and beta-tubulin. Interacts with ZNF335; may enhance ligand-dependent transcriptional activation by nuclear hormone receptors. Post-translationally, phosphorylated.

It is found in the nucleus. Its function is as follows. Nuclear receptor coactivator that directly binds nuclear receptors and stimulates the transcriptional activities in a hormone-dependent fashion. Coactivate expression in an agonist- and AF2-dependent manner. May coactivate expression via a remodeling of chromatin and its interaction with histone acetyltransferase proteins. Involved in the coactivation of different nuclear receptors, such as for steroids (GR and ERs), retinoids (RARs and RXRs), thyroid hormone (TRs), vitamin D3 (VDR) and prostanoids (PPARs). Probably functions as a general coactivator, rather than just a nuclear receptor coactivator. May also be involved in the coactivation of the NF-kappa-B pathway. The chain is Nuclear receptor coactivator 6 (Ncoa6) from Rattus norvegicus (Rat).